Consider the following 256-residue polypeptide: MTNESILESYSGVTPERKKSRMPAKLDWWQSATGLFLGLFMIGHMFFVSTILLGDNVMLWVTKKFELDFIFEGGKPIVVSFLAAFVFAVFIAHAFLAMRKFPINYRQYLTFKTHKDLMRHGDTTLWWIQAMTGFAMFFLGSVHLYIMMTQPQTIGPVSSSFRMVSEWMWPLYLVLLFAVELHGSVGLYRLAVKWGWFDGETPDKTRANLKKLKTLMSAFLIVLGLLTFGAYVKKGLEQTDPNIDYKYFDYKRTHHR.

At 1–30 (MTNESILESYSGVTPERKKSRMPAKLDWWQ) the chain is on the cytoplasmic side. Residues 31 to 52 (SATGLFLGLFMIGHMFFVSTIL) form a helical membrane-spanning segment. Residue His44 coordinates heme b. Over 53–76 (LGDNVMLWVTKKFELDFIFEGGKP) the chain is Periplasmic. Residues 77-98 (IVVSFLAAFVFAVFIAHAFLAM) traverse the membrane as a helical segment. Residue His93 participates in heme b binding. Residues 99–124 (RKFPINYRQYLTFKTHKDLMRHGDTT) are Cytoplasmic-facing. The chain crosses the membrane as a helical span at residues 125 to 149 (LWWIQAMTGFAMFFLGSVHLYIMMT). Residue His143 coordinates heme b. Topologically, residues 150 to 165 (QPQTIGPVSSSFRMVS) are periplasmic. The chain crosses the membrane as a helical span at residues 166–188 (EWMWPLYLVLLFAVELHGSVGLY). His182 is a binding site for heme b. Topologically, residues 189-206 (RLAVKWGWFDGETPDKTR) are cytoplasmic. Residues 207-230 (ANLKKLKTLMSAFLIVLGLLTFGA) form a helical membrane-spanning segment. Residues 231–256 (YVKKGLEQTDPNIDYKYFDYKRTHHR) lie on the Periplasmic side of the membrane.

The protein belongs to the diheme cytochrome b FrdC family. In terms of assembly, part of an enzyme complex containing three subunits: a flavoprotein (frdA), an iron-sulfur protein (frdB), and diheme cytochrome b (frdC). Requires heme b as cofactor.

The protein localises to the cell inner membrane. In terms of biological role, the fumarate reductase enzyme complex is required for fumarate respiration using formate or sulfide as electron donor. This subunit anchors the complex in the membrane and binds a diheme cytochrome b. The sequence is that of Fumarate reductase cytochrome b subunit (frdC) from Wolinella succinogenes (strain ATCC 29543 / DSM 1740 / CCUG 13145 / JCM 31913 / LMG 7466 / NCTC 11488 / FDC 602W) (Vibrio succinogenes).